The chain runs to 483 residues: ATP-dependent RNA helicase DDX25 (483 aa).

Residues 61-74 (LAANSLLNKLIRQS) carry the Nuclear export signal motif. The short motif at 97-125 (KTFEELRLKEELLKGIYAMGFNRPSKIQE) is the Q motif element. A Nuclear localization signal motif is present at residues 100 to 114 (EELRLKEELLKGIYA). The 171-residue stretch at 130-300 (MMLAHPPQNL…ERIIPDPNVI (171 aa)) folds into the Helicase ATP-binding domain. Position 143-150 (143-150 (SQSGTGKT)) interacts with ATP. A DEAD box motif is present at residues 247 to 250 (DEAD). A Helicase C-terminal domain is found at 311-478 (NIRQYYVLCG…QLDPEDMDEI (168 aa)).

The protein belongs to the DEAD box helicase family. Phosphorylated on threonine residues. The phosphorylated form is found in the cytoplasm but not in the nucleus.

It localises to the cytoplasm. The protein localises to the nucleus. The enzyme catalyses ATP + H2O = ADP + phosphate + H(+). Its function is as follows. ATP-dependent RNA helicase. Required for mRNA export and translation regulation during spermatid development. The sequence is that of ATP-dependent RNA helicase DDX25 (DDX25) from Bos taurus (Bovine).